The chain runs to 280 residues: Golgi to ER traffic protein 2 (280 aa).

Topologically, residues methionine 1–lysine 149 are cytoplasmic. A disordered region spans residues arginine 15–methionine 59. Over residues isoleucine 31–valine 43 the composition is skewed to polar residues. A helical transmembrane segment spans residues valine 150 to phenylalanine 170. Over leucine 171–serine 197 the chain is Lumenal. A helical transmembrane segment spans residues phenylalanine 198–serine 217. Over arginine 218 to aspartate 257 the chain is Cytoplasmic. The helical transmembrane segment at threonine 258–phenylalanine 278 threads the bilayer. At arginine 279–arginine 280 the chain is on the lumenal side.

The protein belongs to the GET2 family. As to quaternary structure, component of the Golgi to ER traffic (GET) complex, which is composed of GET1, GET2 and GET3. Within the complex, GET1 and GET2 form a heterotetramer which is stabilized by phosphatidylinositol binding and which binds to the GET3 homodimer.

It is found in the endoplasmic reticulum membrane. Its subcellular location is the golgi apparatus membrane. Functionally, required for the post-translational delivery of tail-anchored (TA) proteins to the endoplasmic reticulum. Together with GET1, acts as a membrane receptor for soluble GET3, which recognizes and selectively binds the transmembrane domain of TA proteins in the cytosol. The GET complex cooperates with the HDEL receptor ERD2 to mediate the ATP-dependent retrieval of resident ER proteins that contain a C-terminal H-D-E-L retention signal from the Golgi to the ER. The sequence is that of Golgi to ER traffic protein 2 from Meyerozyma guilliermondii (strain ATCC 6260 / CBS 566 / DSM 6381 / JCM 1539 / NBRC 10279 / NRRL Y-324) (Yeast).